Consider the following 1245-residue polypeptide: ABC transporter B family member 13 (1245 aa).

Residues 1–14 (MDNTERSSNGNIQA) are compositionally biased toward polar residues. The disordered stretch occupies residues 1-20 (MDNTERSSNGNIQAETEAKE). Positions 47-336 (MLLGGLGACI…AAPSLSAIAK (290 aa)) constitute an ABC transmembrane type-1 1 domain. A helical membrane pass occupies residues 48–68 (LLGGLGACIHGATLPLFFVFF). The N-linked (GlcNAc...) asparagine glycan is linked to Asn-77. Helical transmembrane passes span 94-114 (LYLV…VSCW), 171-191 (HVLR…LSVW), 195-215 (LLTL…AIVM), 276-296 (LGVG…LWYA), and 314-334 (ILNV…LSAI). 2 N-linked (GlcNAc...) asparagine glycosylation sites follow: Asn-351 and Asn-391. The 236-residue stretch at 372 to 607 (IEFQKVSFAY…GGDYATLVNC (236 aa)) folds into the ABC transporter 1 domain. 406–413 (GPSGSGKS) provides a ligand contact to ATP. The segment covering 610–629 (TEPQENSRSIMSETCKSQAG) has biased composition (polar residues). Positions 610-660 (TEPQENSRSIMSETCKSQAGSSSSRRVSSSRRTSSFRVDQEKTKNDDSKKD) are disordered. Low complexity predominate over residues 630 to 646 (SSSSRRVSSSRRTSSFR). A compositionally biased stretch (basic and acidic residues) spans 647–660 (VDQEKTKNDDSKKD). An ABC transmembrane type-1 2 domain is found at 681-969 (ALLGSIGAVL…TLALTPDIVK (289 aa)). 2 helical membrane-spanning segments follow: residues 686-706 (IGAV…AYVL) and 725-745 (AIIF…QHYF). A glycan (N-linked (GlcNAc...) asparagine) is linked at Asn-778. Transmembrane regions (helical) follow at residues 805 to 822 (IVQN…AFFY), 828 to 848 (AVVT…QLFL), 913 to 933 (LSQF…SVLI), and 947 to 967 (FMVL…TPDI). Residues 1004-1240 (IEFRNVSFVY…PNGFYKQLTS (237 aa)) form the ABC transporter 2 domain. Asn-1008 carries an N-linked (GlcNAc...) asparagine glycan. 1039-1046 (GPSGSGKS) lines the ATP pocket. Asn-1106 carries N-linked (GlcNAc...) asparagine glycosylation.

Belongs to the ABC transporter superfamily. ABCB family. Multidrug resistance exporter (TC 3.A.1.201) subfamily.

It localises to the membrane. The protein is ABC transporter B family member 13 (ABCB13) of Arabidopsis thaliana (Mouse-ear cress).